The sequence spans 427 residues: 3-phosphoshikimate 1-carboxyvinyltransferase (427 aa).

Residues lysine 22, serine 23, and arginine 27 each contribute to the 3-phosphoshikimate site. Lysine 22 contacts phosphoenolpyruvate. Phosphoenolpyruvate is bound by residues glycine 96 and arginine 124. 7 residues coordinate 3-phosphoshikimate: serine 169, serine 170, glutamine 171, serine 197, aspartate 313, asparagine 336, and lysine 340. Residue glutamine 171 participates in phosphoenolpyruvate binding. Aspartate 313 functions as the Proton acceptor in the catalytic mechanism. Residues arginine 344, arginine 386, and lysine 411 each contribute to the phosphoenolpyruvate site.

Belongs to the EPSP synthase family. As to quaternary structure, monomer.

Its subcellular location is the cytoplasm. It carries out the reaction 3-phosphoshikimate + phosphoenolpyruvate = 5-O-(1-carboxyvinyl)-3-phosphoshikimate + phosphate. The protein operates within metabolic intermediate biosynthesis; chorismate biosynthesis; chorismate from D-erythrose 4-phosphate and phosphoenolpyruvate: step 6/7. In terms of biological role, catalyzes the transfer of the enolpyruvyl moiety of phosphoenolpyruvate (PEP) to the 5-hydroxyl of shikimate-3-phosphate (S3P) to produce enolpyruvyl shikimate-3-phosphate and inorganic phosphate. This chain is 3-phosphoshikimate 1-carboxyvinyltransferase, found in Escherichia coli O9:H4 (strain HS).